A 207-amino-acid polypeptide reads, in one-letter code: Sodium/potassium-transporting ATPase subunit beta-1-interacting protein 1 (207 aa).

The next 3 helical transmembrane spans lie at 2-22 (GKCSGRCTLVAFCCLQLVAAL), 35-55 (APILANFLHIMAVILGIFGTV), and 62-82 (LILYAAWLVLWVGWNAFIICF). N-linked (GlcNAc...) asparagine glycosylation occurs at N100. A helical transmembrane segment spans residues 147 to 167 (ALSSALQIFLALFGFVFACYV).

Belongs to the NKAIN family. As to quaternary structure, interacts with ATP1B1 C-terminus. In terms of tissue distribution, detected in the brain only and specifically in neurons. Expressed in multiple regions such as cerebral cortex, thalamus, hippocampus, olfactory bulb and brainstem as well as in cerebellum with high expression in granular cell layer.

Its subcellular location is the cell membrane. This is Sodium/potassium-transporting ATPase subunit beta-1-interacting protein 1 (Nkain1) from Mus musculus (Mouse).